We begin with the raw amino-acid sequence, 289 residues long: Syntaxin-3 (289 aa).

Over 1–263 (MKDRLEQLKA…MKYQGQARKK (263 aa)) the chain is Cytoplasmic. Residues 32-111 (MDEFFSEIEE…IEEDEVRSSA (80 aa)) adopt a coiled-coil conformation. The region spanning 191–253 (LSEIEGRHKD…EKARDETKRA (63 aa)) is the t-SNARE coiled-coil homology domain. Residues 264–284 (LIIIIVIVVVLLGILALIIGL) traverse the membrane as a helical; Anchor for type IV membrane protein segment. Residues 285–289 (SVGLK) lie on the Extracellular side of the membrane.

This sequence belongs to the syntaxin family. Interacts with REEP6. Interacts with PRPH2 in rod and cone photoreceptors. Interacts with ROM1. Interacts with SNAP25. Interacts with VAMP2. Heart, spleen, lung and kidney.

The protein localises to the membrane. Functionally, potentially involved in docking of synaptic vesicles at presynaptic active zones. Apical receptor involved in membrane fusion of apical vesicles. Essential for survival of retinal photoreceetors. The protein is Syntaxin-3 (Stx3) of Rattus norvegicus (Rat).